A 678-amino-acid chain; its full sequence is UvrABC system protein B (678 aa).

The Helicase ATP-binding domain occupies 35-422 (EGVSDGLMFQ…ADNVVEQVVR (388 aa)). 48–55 (GVTGSGKT) lines the ATP pocket. A Beta-hairpin motif is present at residues 101-124 (YYDYYQPEAYVPTRDLFIEKDSSI). Residues 439–605 (QVDDLLGEIH…GVSKAVRELI (167 aa)) form the Helicase C-terminal domain. A UVR domain is found at 633 to 668 (AREIRRLEKLMMDHARNLEFEQAAAARDALNALKSR).

It belongs to the UvrB family. As to quaternary structure, forms a heterotetramer with UvrA during the search for lesions. Interacts with UvrC in an incision complex.

The protein resides in the cytoplasm. The UvrABC repair system catalyzes the recognition and processing of DNA lesions. A damage recognition complex composed of 2 UvrA and 2 UvrB subunits scans DNA for abnormalities. Upon binding of the UvrA(2)B(2) complex to a putative damaged site, the DNA wraps around one UvrB monomer. DNA wrap is dependent on ATP binding by UvrB and probably causes local melting of the DNA helix, facilitating insertion of UvrB beta-hairpin between the DNA strands. Then UvrB probes one DNA strand for the presence of a lesion. If a lesion is found the UvrA subunits dissociate and the UvrB-DNA preincision complex is formed. This complex is subsequently bound by UvrC and the second UvrB is released. If no lesion is found, the DNA wraps around the other UvrB subunit that will check the other stand for damage. This chain is UvrABC system protein B, found in Bordetella pertussis (strain Tohama I / ATCC BAA-589 / NCTC 13251).